The primary structure comprises 201 residues: NAD(P)H dehydrogenase (quinone) (201 aa).

Residues 4–192 enclose the Flavodoxin-like domain; that stretch reads VLVLYYSSYG…TIARFQGQHI (189 aa). Residues 10–15 and 80–82 each bind FMN; these read SSYGHV and TRF. Tyr12 contacts NAD(+). Trp100 is a substrate binding site. FMN-binding positions include 115 to 121 and His136; that span reads STASQHG.

Belongs to the WrbA family. Requires FMN as cofactor.

The enzyme catalyses a quinone + NADH + H(+) = a quinol + NAD(+). It catalyses the reaction a quinone + NADPH + H(+) = a quinol + NADP(+). The sequence is that of NAD(P)H dehydrogenase (quinone) from Chromohalobacter salexigens (strain ATCC BAA-138 / DSM 3043 / CIP 106854 / NCIMB 13768 / 1H11).